The primary structure comprises 341 residues: Phosphoribosylformylglycinamidine cyclo-ligase (341 aa).

It belongs to the AIR synthase family.

The protein resides in the cytoplasm. The catalysed reaction is 2-formamido-N(1)-(5-O-phospho-beta-D-ribosyl)acetamidine + ATP = 5-amino-1-(5-phospho-beta-D-ribosyl)imidazole + ADP + phosphate + H(+). The protein operates within purine metabolism; IMP biosynthesis via de novo pathway; 5-amino-1-(5-phospho-D-ribosyl)imidazole from N(2)-formyl-N(1)-(5-phospho-D-ribosyl)glycinamide: step 2/2. The chain is Phosphoribosylformylglycinamidine cyclo-ligase from Caldicellulosiruptor bescii (strain ATCC BAA-1888 / DSM 6725 / KCTC 15123 / Z-1320) (Anaerocellum thermophilum).